The following is a 315-amino-acid chain: piRNA biogenesis protein EXD1 (315 aa).

One can recognise a 3'-5' exonuclease domain in the interval 141–228; that stretch reads IYIFDIQVMQ…ECLTNYLGLQ (88 aa).

It belongs to the EXD1 family. Homodimer. Component of the PET complex, at least composed of EXD1, SIWI, TDRD12 and piRNAs.

It is found in the cytoplasm. Its function is as follows. RNA-binding component of the PET complex, a multiprotein complex required for the processing of piRNAs during spermatogenesis. The piRNA metabolic process mediates the repression of transposable elements during meiosis by forming complexes composed of piRNAs and Piwi proteins and governs the methylation and subsequent repression of transposable elements, preventing their mobilization, which is essential for the germline integrity. The PET complex is required during the secondary piRNAs metabolic process for the PIWIL2 slicing-triggered loading of PIWIL4 piRNAs. In the PET complex, EXD1 probably acts as an RNA adapter. EXD1 is an inactive exonuclease. The protein is piRNA biogenesis protein EXD1 of Bombyx mori (Silk moth).